The sequence spans 446 residues: Tubulin beta-2 chain (446 aa).

Residues glutamine 11, glutamate 69, serine 138, glycine 142, threonine 143, glycine 144, asparagine 204, and asparagine 226 each coordinate GTP. Glutamate 69 serves as a coordination point for Mg(2+).

The protein belongs to the tubulin family. In terms of assembly, dimer of alpha and beta chains. A typical microtubule is a hollow water-filled tube with an outer diameter of 25 nm and an inner diameter of 15 nM. Alpha-beta heterodimers associate head-to-tail to form protofilaments running lengthwise along the microtubule wall with the beta-tubulin subunit facing the microtubule plus end conferring a structural polarity. Microtubules usually have 13 protofilaments but different protofilament numbers can be found in some organisms and specialized cells. It depends on Mg(2+) as a cofactor.

The protein resides in the cytoplasm. It is found in the cytoskeleton. In terms of biological role, tubulin is the major constituent of microtubules, a cylinder consisting of laterally associated linear protofilaments composed of alpha- and beta-tubulin heterodimers. Microtubules grow by the addition of GTP-tubulin dimers to the microtubule end, where a stabilizing cap forms. Below the cap, tubulin dimers are in GDP-bound state, owing to GTPase activity of alpha-tubulin. The chain is Tubulin beta-2 chain (tub2) from Hypocrea rufa (Trichoderma viride).